A 233-amino-acid polypeptide reads, in one-letter code: Uridylate kinase (233 aa).

An ATP-binding site is contributed by 9–10 (GS). Gly-43 is a UMP binding site. ATP contacts are provided by Gly-44 and Arg-48. Residues Asp-65 and 113-119 (VTPGQTT) contribute to the UMP site. Positions 139, 145, and 148 each coordinate ATP.

It belongs to the UMP kinase family. Homohexamer.

It localises to the cytoplasm. It catalyses the reaction UMP + ATP = UDP + ADP. It functions in the pathway pyrimidine metabolism; CTP biosynthesis via de novo pathway; UDP from UMP (UMPK route): step 1/1. With respect to regulation, inhibited by UTP. Functionally, catalyzes the reversible phosphorylation of UMP to UDP. The protein is Uridylate kinase of Methanosarcina mazei (strain ATCC BAA-159 / DSM 3647 / Goe1 / Go1 / JCM 11833 / OCM 88) (Methanosarcina frisia).